Here is a 496-residue protein sequence, read N- to C-terminus: MEPFTIFSLVVASLVFFACWALVAPNTSKNLPPGPPKLPIIGNIHQLKSPTPHRVLKDLAKKYGPIMHLQLGQVSTVVVSTPRLAQEIMKTNDISFADRPTTTTSQIFFYKAQDIGWAPYGEYWRQMKKICTLELLSAKKVRSFSSIREEELTRIRKILEFKAGTPINYTEMTIEMVNNVICKATLGDCCKDQALLIELLYDVLKTLSAFNLASYYPRLQFLNVISGKKAKWLKMQKRLDDIMEDILKEHRAKGRAKNSDQEDLVDVLLRIKDTGGLDINVTDEHVKAVVLDMLTAGTDTSSTTLEWAMTELMRNPDMMKRAQEEVRSVVKGEHVTETDLQSLHYLKLIVKETMRLHAPTPLLVPRECRQDCNVDGYDIPAKTKVLVNAWACGVDPGSWENPDSFIPERFENSSINFMGADFQYIPFGAGRRICPGLTFGLSMVEYPLAHFLYHFDWKLPYGMKPHELDITEITTISTSLKHHLKIVPFPKSSLAK.

A helical; Signal-anchor for type II membrane protein membrane pass occupies residues phenylalanine 4 to alanine 24. N-linked (GlcNAc...) asparagine glycans are attached at residues asparagine 26, asparagine 168, asparagine 280, and asparagine 412. Position 434 (cysteine 434) interacts with heme.

It belongs to the cytochrome P450 family. It depends on heme as a cofactor. In terms of tissue distribution, expressed in floral glandular trichomes.

The protein resides in the membrane. It catalyses the reaction germacra-1(10),4,11(13)-trien-12-oate + reduced [NADPH--hemoprotein reductase] + O2 = (+)-costunolide + oxidized [NADPH--hemoprotein reductase] + 2 H2O. Its pathway is secondary metabolite biosynthesis; terpenoid biosynthesis. In terms of biological role, involved in the biosynthesis of germacrene-derived sesquiterpene lactones. Component of the parthenolide biosynthetic pathway; parthenolide and conjugates are promising anti-cancer drugs highly active against colon cancer cells. Hydroxylates germacrene A acid to 6-alpha-hydroxy-germacrene A acid, a precursor of sesquiterpene lactones that spontaneously undergoes a lactonization which yields costunolide. This is Costunolide synthase from Tanacetum parthenium (Feverfew).